We begin with the raw amino-acid sequence, 49 residues long: Large ribosomal subunit protein bL32 (49 aa).

This sequence belongs to the bacterial ribosomal protein bL32 family.

The sequence is that of Large ribosomal subunit protein bL32 from Nitratiruptor sp. (strain SB155-2).